A 232-amino-acid chain; its full sequence is Large ribosomal subunit protein uL1 (232 aa).

The protein belongs to the universal ribosomal protein uL1 family. Part of the 50S ribosomal subunit.

Its function is as follows. Binds directly to 23S rRNA. The L1 stalk is quite mobile in the ribosome, and is involved in E site tRNA release. Protein L1 is also a translational repressor protein, it controls the translation of the L11 operon by binding to its mRNA. The sequence is that of Large ribosomal subunit protein uL1 from Burkholderia ambifaria (strain MC40-6).